We begin with the raw amino-acid sequence, 397 residues long: CCA-adding enzyme (397 aa).

2 residues coordinate ATP: Gly26 and Arg29. Gly26 and Arg29 together coordinate CTP. Mg(2+)-binding residues include Asp39 and Asp41. Positions 110, 153, 156, 159, and 162 each coordinate ATP. CTP-binding residues include Arg110, Asp153, Arg156, Arg159, and Arg162.

This sequence belongs to the tRNA nucleotidyltransferase/poly(A) polymerase family. Bacterial CCA-adding enzyme type 3 subfamily. In terms of assembly, homodimer. It depends on Mg(2+) as a cofactor.

The catalysed reaction is a tRNA precursor + 2 CTP + ATP = a tRNA with a 3' CCA end + 3 diphosphate. It carries out the reaction a tRNA with a 3' CCA end + 2 CTP + ATP = a tRNA with a 3' CCACCA end + 3 diphosphate. Catalyzes the addition and repair of the essential 3'-terminal CCA sequence in tRNAs without using a nucleic acid template. Adds these three nucleotides in the order of C, C, and A to the tRNA nucleotide-73, using CTP and ATP as substrates and producing inorganic pyrophosphate. tRNA 3'-terminal CCA addition is required both for tRNA processing and repair. Also involved in tRNA surveillance by mediating tandem CCA addition to generate a CCACCA at the 3' terminus of unstable tRNAs. While stable tRNAs receive only 3'-terminal CCA, unstable tRNAs are marked with CCACCA and rapidly degraded. In Bacillus cereus (strain Q1), this protein is CCA-adding enzyme.